The chain runs to 153 residues: Large ribosomal subunit protein uL13 (153 aa).

It belongs to the universal ribosomal protein uL13 family. As to quaternary structure, part of the 50S ribosomal subunit.

Functionally, this protein is one of the early assembly proteins of the 50S ribosomal subunit, although it is not seen to bind rRNA by itself. It is important during the early stages of 50S assembly. This chain is Large ribosomal subunit protein uL13, found in Methylobacterium sp. (strain 4-46).